Here is a 387-residue protein sequence, read N- to C-terminus: tRNA N6-adenosine threonylcarbamoyltransferase (387 aa).

2 residues coordinate Fe cation: His-112 and His-116. Substrate contacts are provided by residues 134 to 138, Asp-167, Gly-180, and Asn-325; that span reads LASGG. Asp-353 lines the Fe cation pocket.

The protein belongs to the KAE1 / TsaD family. The cofactor is Fe(2+).

It localises to the cytoplasm. The catalysed reaction is L-threonylcarbamoyladenylate + adenosine(37) in tRNA = N(6)-L-threonylcarbamoyladenosine(37) in tRNA + AMP + H(+). Required for the formation of a threonylcarbamoyl group on adenosine at position 37 (t(6)A37) in tRNAs that read codons beginning with adenine. Is involved in the transfer of the threonylcarbamoyl moiety of threonylcarbamoyl-AMP (TC-AMP) to the N6 group of A37, together with TsaE and TsaB. TsaD likely plays a direct catalytic role in this reaction. This Rickettsia typhi (strain ATCC VR-144 / Wilmington) protein is tRNA N6-adenosine threonylcarbamoyltransferase.